Reading from the N-terminus, the 68-residue chain is Large ribosomal subunit protein eL24 (68 aa).

Cysteine 7, cysteine 10, cysteine 33, and cysteine 37 together coordinate Zn(2+). The C4-type zinc-finger motif lies at 7–37 (CDFCGRIIEPGTGKMFVKNDGTILWFCSSKC).

It belongs to the eukaryotic ribosomal protein eL24 family. In terms of assembly, part of the 50S ribosomal subunit. Forms a cluster with proteins L3 and L14. It depends on Zn(2+) as a cofactor.

Functionally, binds to the 23S rRNA. In Methanopyrus kandleri (strain AV19 / DSM 6324 / JCM 9639 / NBRC 100938), this protein is Large ribosomal subunit protein eL24.